A 375-amino-acid polypeptide reads, in one-letter code: All-trans-retinol dehydrogenase [NAD(+)] ADH1B (375 aa).

Ser2 bears the N-acetylserine mark. Ser23 carries the post-translational modification Phosphoserine. Tyr35 bears the Phosphotyrosine mark. Zn(2+)-binding residues include Cys47, His68, Cys98, Cys101, Cys104, Cys112, and Cys175. NAD(+) is bound by residues 200–205, Asp224, Lys229, 293–295, and Arg370; these read GLGGVG and VGV.

The protein belongs to the zinc-containing alcohol dehydrogenase family. In terms of assembly, homodimer or heterodimer of closely related subunits. Zn(2+) serves as cofactor.

Its subcellular location is the cytoplasm. It catalyses the reaction all-trans-retinol + NAD(+) = all-trans-retinal + NADH + H(+). It carries out the reaction all-trans-4-hydroxyretinol + NAD(+) = all-trans-4-hydroxyretinal + NADH + H(+). The catalysed reaction is all-trans-4-oxoretinol + NAD(+) = all-trans-4-oxoretinal + NADH + H(+). Catalyzes the NAD-dependent oxidation of all-trans-retinol and its derivatives such as all-trans-4-hydroxyretinol and may participate in retinoid metabolism. In vitro can also catalyze the NADH-dependent reduction of all-trans-retinal and its derivatives such as all-trans-4-oxoretinal. Catalyzes in the oxidative direction with higher efficiency. Has the same affinity for all-trans-4-hydroxyretinol and all-trans-4-oxoretinal. The chain is All-trans-retinol dehydrogenase [NAD(+)] ADH1B from Pan troglodytes (Chimpanzee).